The chain runs to 162 residues: Shikimate kinase (162 aa).

10-15 (GAGKST) contributes to the ATP binding site. Mg(2+) is bound at residue Ser-14. Asp-28, Arg-52, and Gly-73 together coordinate substrate. Arg-113 contacts ATP. Position 129 (Arg-129) interacts with substrate.

This sequence belongs to the shikimate kinase family. In terms of assembly, monomer. The cofactor is Mg(2+).

It localises to the cytoplasm. The catalysed reaction is shikimate + ATP = 3-phosphoshikimate + ADP + H(+). It participates in metabolic intermediate biosynthesis; chorismate biosynthesis; chorismate from D-erythrose 4-phosphate and phosphoenolpyruvate: step 5/7. Catalyzes the specific phosphorylation of the 3-hydroxyl group of shikimic acid using ATP as a cosubstrate. The chain is Shikimate kinase from Lactococcus lactis subsp. cremoris (strain SK11).